The chain runs to 190 residues: Prostaglandin-H2 D-isomerase (190 aa).

The signal sequence occupies residues 1–22 (MATHHTLWMGLALLGVLGDLQA). S29 is a glycosylation site (O-linked (GalNAc...) serine). N51 carries an N-linked (GlcNAc...) (complex) asparagine glycan. The active-site Nucleophile is the C65. N78 carries an N-linked (GlcNAc...) (complex) asparagine glycan. A disulfide bridge connects residues C89 and C186.

The protein belongs to the calycin superfamily. Lipocalin family. As to quaternary structure, monomer. N- and O-glycosylated. Both N-glycosylation recognition sites are almost quantitatively occupied by N-glycans of the biantennary complex type, with a considerable proportion of structures bearing a bisecting GlcNAc. N-glycan at Asn-78: dHex1Hex5HexNAc4. Agalacto structure as well as sialylated and nonsialylated oligosaccharides bearing alpha2-3- and/or alpha2-6-linked NeuNAc are present. In terms of tissue distribution, abundant in the brain and CNS, where it is expressed in tissues of the blood-brain barrier and secreted into the cerebro-spinal fluid. Abundantly expressed in the heart. In the male reproductive system, it is expressed in the testis, epididymis and prostate, and is secreted into the seminal fluid. Expressed in the eye and secreted into the aqueous humor. Lower levels detected in various tissue fluids such as serum, normal urine, ascitic fluid and tear fluid. Also found in a number of other organs including ovary, fimbriae of the fallopian tubes, kidney, leukocytes.

It localises to the rough endoplasmic reticulum. Its subcellular location is the nucleus membrane. It is found in the golgi apparatus. The protein resides in the cytoplasm. The protein localises to the perinuclear region. It localises to the secreted. The catalysed reaction is prostaglandin H2 = prostaglandin D2. Functionally, catalyzes the conversion of PGH2 to PGD2, a prostaglandin involved in smooth muscle contraction/relaxation and a potent inhibitor of platelet aggregation. Involved in a variety of CNS functions, such as sedation, NREM sleep and PGE2-induced allodynia, and may have an anti-apoptotic role in oligodendrocytes. Binds small non-substrate lipophilic molecules, including biliverdin, bilirubin, retinal, retinoic acid and thyroid hormone, and may act as a scavenger for harmful hydrophobic molecules and as a secretory retinoid and thyroid hormone transporter. Possibly involved in development and maintenance of the blood-brain, blood-retina, blood-aqueous humor and blood-testis barrier. It is likely to play important roles in both maturation and maintenance of the central nervous system and male reproductive system. Involved in PLA2G3-dependent maturation of mast cells. PLA2G3 is secreted by immature mast cells and acts on nearby fibroblasts upstream to PTDGS to synthesize PGD2, which in turn promotes mast cell maturation and degranulation via PTGDR. The chain is Prostaglandin-H2 D-isomerase (PTGDS) from Homo sapiens (Human).